Here is a 120-residue protein sequence, read N- to C-terminus: Autophagy-related protein 8d (120 aa).

The Phosphatidylethanolamine amidated glycine moiety is linked to residue Gly117. The propeptide at 118–120 (IFF) is removed in mature form.

The protein belongs to the ATG8 family. Interacts with ATG4B. Interacts with NBR1. In terms of processing, the C-terminal 3 residues are removed by ATG4 to expose Gly-117 at the C-terminus. This Gly-117 forms then a thioester bond with the 'Cys-558' of ATG7 (E1-like activating enzyme) before being transferred to the 'Cys-258' of ATG3 (the specific E2 conjugating enzyme), in order to be finally amidated with phosphatidylethanolamine. This lipid modification anchors ATG8 to autophagosomes. Constitutively expressed.

The protein localises to the cytoplasmic vesicle. It is found in the autophagosome membrane. The protein resides in the vacuole membrane. Its subcellular location is the cytoplasm. It localises to the cytoskeleton. Ubiquitin-like modifier involved in autophagosomes formation. May mediate the delivery of the autophagosomes to the vacuole via the microtubule cytoskeleton. This is Autophagy-related protein 8d (ATG8D) from Arabidopsis thaliana (Mouse-ear cress).